A 545-amino-acid chain; its full sequence is Purple acid phosphatase 13 (545 aa).

Positions 1–25 (MVVKYTMSMSFFVIFASTVTIIVHG) are cleaved as a signal peptide. N-linked (GlcNAc...) asparagine glycans are attached at residues Asn-125 and Asn-145. Asp-203 is a Fe cation binding site. The N-linked (GlcNAc...) asparagine glycan is linked to Asn-209. Residue Tyr-233 participates in Fe cation binding. 6 N-linked (GlcNAc...) asparagine glycosylation sites follow: Asn-240, Asn-254, Asn-306, Asn-321, Asn-351, and Asn-367. The active-site Proton donor is His-389. His-416 lines the Zn(2+) pocket. 416 to 418 (HVD) is a substrate binding site. Asn-428, Asn-466, Asn-475, and Asn-510 each carry an N-linked (GlcNAc...) asparagine glycan.

It belongs to the metallophosphoesterase superfamily. Purple acid phosphatase family. In terms of assembly, homodimer. The cofactor is Fe cation. Zn(2+) is required as a cofactor. Expressed in stems, leaves, flowers and siliques.

Its subcellular location is the secreted. The catalysed reaction is a phosphate monoester + H2O = an alcohol + phosphate. The sequence is that of Purple acid phosphatase 13 (PAP13) from Arabidopsis thaliana (Mouse-ear cress).